Here is a 57-residue protein sequence, read N- to C-terminus: Small ribosomal subunit protein eS31 (57 aa).

Zn(2+)-binding residues include Cys29, Cys32, Cys47, and Cys50. The C4-type zinc finger occupies 29 to 50 (CPRCGPGVFMANHKDRWSCGRC).

Belongs to the eukaryotic ribosomal protein eS31 family. As to quaternary structure, part of the 30S ribosomal subunit. Requires Zn(2+) as cofactor.

The sequence is that of Small ribosomal subunit protein eS31 from Thermococcus kodakarensis (strain ATCC BAA-918 / JCM 12380 / KOD1) (Pyrococcus kodakaraensis (strain KOD1)).